The chain runs to 307 residues: Geranylgeranyl diphosphate synthase (307 aa).

3 residues coordinate isopentenyl diphosphate: Lys-52, Arg-55, and His-86. Asp-93 and Asp-99 together coordinate Mg(2+). Arg-104 contributes to the (2E,6E)-farnesyl diphosphate binding site. Arg-105 contributes to the isopentenyl diphosphate binding site. 3 residues coordinate (2E,6E)-farnesyl diphosphate: Lys-188, Thr-189, and Gln-226.

The protein belongs to the FPP/GGPP synthase family. The cofactor is Mg(2+).

The catalysed reaction is isopentenyl diphosphate + (2E,6E)-farnesyl diphosphate = (2E,6E,10E)-geranylgeranyl diphosphate + diphosphate. It participates in isoprenoid biosynthesis; geranylgeranyl diphosphate biosynthesis; geranylgeranyl diphosphate from farnesyl diphosphate and isopentenyl diphosphate: step 1/1. In terms of biological role, catalyzes the condensation of farnesyl diphosphate (FPP) and isopentenyl diphosphate (IPP) to yield geranylgeranyl diphosphate (GGPP) needed for biosynthesis of carotenoids and diterpenes. The chain is Geranylgeranyl diphosphate synthase (crtE) from Pseudescherichia vulneris (Escherichia vulneris).